Consider the following 361-residue polypeptide: Teichoic acids export ATP-binding protein TagH (361 aa).

The ABC transporter domain maps to Thr13–Gly246. Position 60 to 67 (Gly60 to Ser67) interacts with ATP. Residues Gln247–Lys361 form a unknown region.

It belongs to the ABC transporter superfamily. Teichoic acids exporter (TC 3.A.1.104.1) family. As to quaternary structure, the complex is composed of two ATP-binding proteins (TagH) and two transmembrane proteins (TagG).

It localises to the cell membrane. It carries out the reaction ATP + H2O + teichoic acidSide 1 = ADP + phosphate + teichoic acidSide 2.. Part of the ABC transporter complex TagGH involved in teichoic acids export. Responsible for energy coupling to the transport system. This chain is Teichoic acids export ATP-binding protein TagH, found in Levilactobacillus brevis (strain ATCC 367 / BCRC 12310 / CIP 105137 / JCM 1170 / LMG 11437 / NCIMB 947 / NCTC 947) (Lactobacillus brevis).